Reading from the N-terminus, the 238-residue chain is MNQQQFVTALAEQGLEVSDHQLQQFRKYYELLVEWNEKMNLTAITDEEGVYLKHFYDSITAAFYFDFTKVETVCDVGAGAGFPSLPIKIMFPHLKVTIIDSLNKRIGFLNMLATELGLEGVAFHHGRAEEFGKNKQFREHFDVVTARAVARMSVLAEYCLPLARVGGQFVALKAAKLGEELEEGATALKVLGGNLRESFQFQLPGEESERNIVIVDKKRLTPGKYPRKAGTPAKDPLG.

S-adenosyl-L-methionine is bound by residues glycine 77, phenylalanine 82, 128-129 (AE), and arginine 147.

This sequence belongs to the methyltransferase superfamily. RNA methyltransferase RsmG family.

Its subcellular location is the cytoplasm. In terms of biological role, specifically methylates the N7 position of guanine in position 535 of 16S rRNA. This chain is Ribosomal RNA small subunit methyltransferase G, found in Exiguobacterium sibiricum (strain DSM 17290 / CCUG 55495 / CIP 109462 / JCM 13490 / 255-15).